We begin with the raw amino-acid sequence, 410 residues long: MGLKHFLEKIEPHFLPGGKHEKWYALYEAAATIFYTSGAVTRKAAHVRDALDSKRMMILVWLALFPAMFYGMYNVGAQAFGALTPDLLQQSIANDWHYALANALGINMSSEAGVLGKMLFGAIYFLPIYATVFIVGGFWEVLFATVRKHEINEGFFVTSILFALIVPPTLPLWQAALGISFGVVVAKEVFGGTGKNFMNPALAGRAFLFFAYPANLSGDAVWTAVDGYSGATALAQWAAHGADGLKNAITGQTITWMDAFIGKLPGSIGEVSTLALLIGGAFIVFARIASWRIIAGVMIGMIAMSSLFNFIGSDTNAMFAMPWYWHLVVGGFAIGMLFMATDPVSASFTNVGKWWYGALIGVMCVLIRVVNPAYPEGMMLAILFANLFAPIFDYFVAQANIKRRKARSNG.

The next 3 helical transmembrane spans lie at 56–76 (MMIL…YNVG), 119–139 (LFGA…GGFW), and 159–179 (SILF…ALGI). The residue at position 232 (Thr-232) is an FMN phosphoryl threonine. 5 helical membrane passes run 266-286 (GSIG…IVFA), 293-313 (IIAG…FIGS), 318-338 (MFAM…GMLF), 347-367 (SFTN…CVLI), and 377-397 (GMML…YFVA).

It belongs to the NqrB/RnfD family. Composed of six subunits; NqrA, NqrB, NqrC, NqrD, NqrE and NqrF. It depends on FMN as a cofactor.

It localises to the cell inner membrane. It catalyses the reaction a ubiquinone + n Na(+)(in) + NADH + H(+) = a ubiquinol + n Na(+)(out) + NAD(+). Functionally, NQR complex catalyzes the reduction of ubiquinone-1 to ubiquinol by two successive reactions, coupled with the transport of Na(+) ions from the cytoplasm to the periplasm. NqrA to NqrE are probably involved in the second step, the conversion of ubisemiquinone to ubiquinol. This chain is Na(+)-translocating NADH-quinone reductase subunit B, found in Neisseria meningitidis serogroup A / serotype 4A (strain DSM 15465 / Z2491).